The sequence spans 125 residues: MQMDPGPQVPLYWLGFVYAALAALGGISGYAKVGSVQSPSAGFFFSELAGLDASQPSRNPKEHLSSPVYIWDLARYYANKILTLWNIYACGFSCRCLLIVSKLGSMYGEQILSVVAMSQLGLMKN.

2 helical membrane passes run 9–29 and 81–101; these read VPLY…GISG and ILTL…LIVS.

The protein belongs to the TMEM14 family.

Its subcellular location is the membrane. This chain is Transmembrane protein 14EP (TMEM14EP), found in Homo sapiens (Human).